The primary structure comprises 253 residues: Sortase SrtE2 (253 aa).

The segment covering methionine 1–glutamate 11 has biased composition (basic and acidic residues). The tract at residues methionine 1–proline 23 is disordered. A helical transmembrane segment spans residues alanine 30–valine 50. A disordered region spans residues glutamate 69–glycine 89. Cysteine 220 is an active-site residue.

It belongs to the bacterial sortase family. Class E subfamily.

The protein localises to the cell membrane. The enzyme catalyses The enzyme catalyzes a cell wall sorting reaction in which a surface protein with a sorting signal containing a LPXTG motif is cleaved between the Thr and Gly residue. The resulting threonine carboxyl end of the protein is covalently attached to a pentaglycine cross-bridge of peptidoglycan.. Its function is as follows. Transpeptidase that anchors surface proteins to the cell wall. Recognizes Leu-Ala-x-Thr-Gly and Leu-Pro-x-Thr-Gly, with a preference for the former. Unlike the S.aureus sortase it cleaves not only the Thr-Gly motif but also the Ala-X bond; an Ala-Glu bond is a better substrate than the Thr-Gly motif in vitro. Among its possible substrates are the chaplins ChpA, ChpB and ChpC; this enzyme is more important for ChpC attachment than is SrtE1. A double knockout mutant of srtE1 and srtE2 shows a developmental defect in aerial hyphae formation more dramatic than that due to chaplin deletion. This Streptomyces coelicolor (strain ATCC BAA-471 / A3(2) / M145) protein is Sortase SrtE2.